A 137-amino-acid chain; its full sequence is Nucleoside diphosphate kinase (137 aa).

Residues Lys9, Phe57, Arg85, Thr91, Arg102, and Asn112 each contribute to the ATP site. Residue His115 is the Pros-phosphohistidine intermediate of the active site.

The protein belongs to the NDK family. As to quaternary structure, homotetramer. Mg(2+) is required as a cofactor.

The protein localises to the cytoplasm. The enzyme catalyses a 2'-deoxyribonucleoside 5'-diphosphate + ATP = a 2'-deoxyribonucleoside 5'-triphosphate + ADP. The catalysed reaction is a ribonucleoside 5'-diphosphate + ATP = a ribonucleoside 5'-triphosphate + ADP. Major role in the synthesis of nucleoside triphosphates other than ATP. The ATP gamma phosphate is transferred to the NDP beta phosphate via a ping-pong mechanism, using a phosphorylated active-site intermediate. The chain is Nucleoside diphosphate kinase from Pelobacter propionicus (strain DSM 2379 / NBRC 103807 / OttBd1).